Here is a 795-residue protein sequence, read N- to C-terminus: RalBP1-associated Eps domain-containing protein 1 (795 aa).

An EH 1 domain is found at 10-113 (EQKYYSDLFS…SKNEQESRLA (104 aa)). The interval 112-238 (LAASYSSDSE…NWVSFADTPP (127 aa)) is disordered. Positions 115-126 (SYSSDSENQGSY) are enriched in polar residues. 4 positions are modified to phosphoserine: serine 145, serine 162, serine 166, and serine 170. Positions 156–168 (EQQEPVSPVVSPQ) are enriched in low complexity. Threonine 173 carries the phosphothreonine modification. Positions 205–216 (GDAQAGSSAGDA) are enriched in low complexity. A phosphoserine mark is found at serine 272 and serine 273. The EH 2 domain occupies 285–374 (QRQYYVNQFK…ESLMPKLIDL (90 aa)). Tyrosine 288 is modified (phosphotyrosine). Phosphoserine is present on serine 307. Positions 318–353 (LPILELSHIWELSDFDKDGALTLDEFCAAFHLVVAR) constitute an EF-hand domain. 4 residues coordinate Ca(2+): aspartate 331, aspartate 333, aspartate 335, and glutamate 342. Disordered stretches follow at residues 380–433 (VGEQ…SSQT) and 469–720 (ELKR…DEHT). Over residues 407–433 (LNQTWPELNQSSEQWETFSERSSSSQT) the composition is skewed to polar residues. A phosphoserine mark is found at serine 475, serine 482, and serine 489. Polar residues-rich tracts occupy residues 497–518 (INSSVKFPSGNTVDGYSSSDSF) and 525–542 (IGSSVTRQRSHSGTSPDN). At serine 539 the chain carries Phosphoserine. The residue at position 543 (threonine 543) is a Phosphothreonine. Residues 543–553 (TAPPPPPPRPQ) are compositionally biased toward pro residues. The residue at position 561 (serine 561) is a Phosphoserine. The segment covering 562–573 (LDMNRTFAVTTG) has biased composition (polar residues). Low complexity predominate over residues 574–583 (QQQAGVVAHP). The span at 584 to 595 (PAVPPRPQPSQA) shows a compositional bias: pro residues. 2 stretches are compositionally biased toward polar residues: residues 611-622 (THTSTSPQQIPE) and 681-692 (ATNVPANVSKGT). The segment at 651–795 (HPEVLPAEKA…LEQLRPFSHL (145 aa)) is interaction with RALBP1. The span at 707–720 (KSEDELRPDVDEHT) shows a compositional bias: basic and acidic residues. Residues serine 708 and serine 739 each carry the phosphoserine modification. Positions 750 to 790 (SIRRNKETNTVLARLNSELQQQLKDVLEERISLEVQLEQLR) form a coiled coil.

As to quaternary structure, homodimer (Potential). Interacts with RALBP1, CRK and GRB2. Binding to RALBP1 does not affect its Ral-binding activity. Forms a complex with the SH3 domains of CRK and GRB2 which may link it to an EGF-responsive tyrosine kinase. Interacts with RAB11FIP2. Interacts with AMPH, ITSN1 (via SH3 domains) and SGIP1; may be involved in clathrin-mediated endocytosis. In terms of processing, EGF stimulates phosphorylation on Tyr-residues. As to expression, expressed in all tissues examined. The highest level expression was found in the kidney and testis.

It is found in the membrane. The protein resides in the clathrin-coated pit. Its function is as follows. May coordinate the cellular actions of activated EGF receptors and Ral-GTPases. The polypeptide is RalBP1-associated Eps domain-containing protein 1 (Reps1) (Mus musculus (Mouse)).